A 161-amino-acid polypeptide reads, in one-letter code: Transcriptional regulator MraZ (161 aa).

SpoVT-AbrB domains are found at residues 7–55 (RYTN…GPAF) and 84–127 (SAEL…EPGA).

The protein belongs to the MraZ family. As to quaternary structure, forms oligomers.

It localises to the cytoplasm. Its subcellular location is the nucleoid. The chain is Transcriptional regulator MraZ from Parvibaculum lavamentivorans (strain DS-1 / DSM 13023 / NCIMB 13966).